The sequence spans 207 residues: LexA repressor (207 aa).

Residues 28 to 48 (VREIGEAVGLASSFTVHGHLS) constitute a DNA-binding region (H-T-H motif). Catalysis depends on for autocatalytic cleavage activity residues Ser130 and Lys168.

This sequence belongs to the peptidase S24 family. In terms of assembly, homodimer.

It catalyses the reaction Hydrolysis of Ala-|-Gly bond in repressor LexA.. Functionally, represses a number of genes involved in the response to DNA damage (SOS response), including recA and lexA. In the presence of single-stranded DNA, RecA interacts with LexA causing an autocatalytic cleavage which disrupts the DNA-binding part of LexA, leading to derepression of the SOS regulon and eventually DNA repair. This is LexA repressor from Staphylococcus aureus (strain Newman).